Reading from the N-terminus, the 158-residue chain is ABA-responsive protein ABR18 (158 aa).

It belongs to the BetVI family.

The protein is ABA-responsive protein ABR18 of Pisum sativum (Garden pea).